The primary structure comprises 391 residues: Polysialic acid biosynthesis protein P7 (391 aa).

Functionally, may be involved in the synthesis of polysialic acid (PSA). This chain is Polysialic acid biosynthesis protein P7 (neuC), found in Escherichia coli.